A 283-amino-acid chain; its full sequence is Nucleoid occlusion protein (283 aa).

A DNA-binding region (H-T-H motif) is located at residues 148–167 (EALAQRLGKGQSTIANKLRL).

The protein belongs to the ParB family.

The protein localises to the cytoplasm. It is found in the nucleoid. Effects nucleoid occlusion by binding relatively nonspecifically to DNA and preventing the assembly of the division machinery in the vicinity of the nucleoid, especially under conditions that disturb the cell cycle. It helps to coordinate cell division and chromosome segregation by preventing the formation of the Z ring through the nucleoid, which would cause chromosome breakage. The chain is Nucleoid occlusion protein (noc) from Bacillus subtilis (strain 168).